The primary structure comprises 110 residues: U1-lycotoxin-Ls1ee (110 aa).

Positions 1 to 20 are cleaved as a signal peptide; that stretch reads MKFVLLFGVLLVTLFSYSSA. The propeptide occupies 21-44; sequence EMLDDFDQADEDELLSLIEKEEAR. Cystine bridges form between Cys-47–Cys-62, Cys-54–Cys-71, Cys-61–Cys-89, and Cys-73–Cys-87.

This sequence belongs to the neurotoxin 19 (CSTX) family. 03 subfamily. In terms of tissue distribution, expressed by the venom gland.

Its subcellular location is the secreted. This Lycosa singoriensis (Wolf spider) protein is U1-lycotoxin-Ls1ee.